A 354-amino-acid chain; its full sequence is Uroporphyrinogen decarboxylase (354 aa).

Substrate is bound by residues 27–31 (RQAGR), aspartate 77, tyrosine 154, threonine 209, and histidine 327.

This sequence belongs to the uroporphyrinogen decarboxylase family. As to quaternary structure, homodimer.

The protein resides in the cytoplasm. The enzyme catalyses uroporphyrinogen III + 4 H(+) = coproporphyrinogen III + 4 CO2. The protein operates within porphyrin-containing compound metabolism; protoporphyrin-IX biosynthesis; coproporphyrinogen-III from 5-aminolevulinate: step 4/4. Functionally, catalyzes the decarboxylation of four acetate groups of uroporphyrinogen-III to yield coproporphyrinogen-III. The chain is Uroporphyrinogen decarboxylase from Salmonella dublin (strain CT_02021853).